Consider the following 191-residue polypeptide: Lipoprotein signal peptidase (191 aa).

The next 3 membrane-spanning stretches (helical) occupy residues 26-46 (VWFP…LKAW), 84-104 (AVPL…YLLW), and 110-130 (FLTV…IDGL). Active-site residues include aspartate 137 and aspartate 163. Residues 156 to 176 (FPIFNIADMCVVGGTILLLVA) traverse the membrane as a helical segment.

Belongs to the peptidase A8 family.

Its subcellular location is the cell membrane. The enzyme catalyses Release of signal peptides from bacterial membrane prolipoproteins. Hydrolyzes -Xaa-Yaa-Zaa-|-(S,diacylglyceryl)Cys-, in which Xaa is hydrophobic (preferably Leu), and Yaa (Ala or Ser) and Zaa (Gly or Ala) have small, neutral side chains.. It functions in the pathway protein modification; lipoprotein biosynthesis (signal peptide cleavage). Its function is as follows. This protein specifically catalyzes the removal of signal peptides from prolipoproteins. In Deinococcus radiodurans (strain ATCC 13939 / DSM 20539 / JCM 16871 / CCUG 27074 / LMG 4051 / NBRC 15346 / NCIMB 9279 / VKM B-1422 / R1), this protein is Lipoprotein signal peptidase.